Reading from the N-terminus, the 730-residue chain is Denticleless protein homolog (730 aa).

Methionine 1 carries the post-translational modification N-acetylmethionine. WD repeat units lie at residues 47–89 (GVPV…FRKK), 96–135 (AHWN…LIGT), and 138–178 (GHQC…KDGF). Residues 168–171 (WDTR) carry the DDB1-binding motif motif. Residues 188–198 (AHNTSDKQTPS) are compositionally biased toward polar residues. The disordered stretch occupies residues 188–210 (AHNTSDKQTPSKPKKKQNSKGLA). At threonine 196 the chain carries Phosphothreonine. A Nuclear localization signal motif is present at residues 197-203 (PSKPKKK). WD repeat units lie at residues 214–253 (DFQQ…TAYR), 267–308 (SSTR…TSPV), 313–354 (GHQN…QPPT), and 358–398 (GHSQ…EEKP). A DDB1-binding motif motif is present at residues 243–246 (WDLR). The disordered stretch occupies residues 399 to 443 (GGDKLSTVGWASQKKKESRPGLVTVTSSQSTPAKAPRAKCNPSNS). Residues serine 410 and serine 426 each carry the phosphoserine modification. Threonine 464 is modified (phosphothreonine; by CDK1 and CDK2). The tract at residues 465 to 498 (PTFSIKTSPAKARSPINRRGSVSSVSPKPPSSFK) is disordered. Phosphoserine occurs at positions 485, 490, 495, and 512. Threonine 516 bears the Phosphothreonine mark. The residue at position 557 (serine 557) is a Phosphoserine. Disordered stretches follow at residues 599 to 631 (SKDS…YASE) and 644 to 703 (GEGS…TITP). Phosphoserine occurs at positions 676 and 679. Residues 679–689 (SPSSQTPNSRR) show a composition bias toward polar residues. Phosphothreonine occurs at positions 684 and 702. Serine 717 is subject to Phosphoserine.

It belongs to the WD repeat cdt2 family. Component of the DCX(DTL) E3 ubiquitin ligase complex (also called CRL4(CDT2)), at least composed of CUL4 (CUL4A or CUL4B), DDB1, DTL/CDT2 and RBX1. Interacts with CDKN1A. Interacts with DDB1. Interacts with FBXO11; SCF(FBXWO11) controls DTL stability but DCX(DTL) does not control FBXO11 stability. Interacts with CRY1. Ubiquitinated by the anaphase promoting complex/cyclosome (APC/C). Autoubiquitinated through 'Lys-48'-polyubiquitin chains in a PCNA-independent reaction, allowing proteasomal turnover. Polyubiquitinated by SCF(FBXO11) when not phosphorylated, leading to its degradation. A tight regulation of the polyubiquitination by SCF(FBXO11) is involved in the control of different processes such as TGF-beta signaling, cell cycle progression and exit. Post-translationally, phosphorylated at Thr-464 by CDK1/Cyclin-B and CDK2/Cyclin-A but not by CDK2/Cyclin-E, MAPK1 or PLK1. Phosphorylation at Thr-464 inhibits the interaction with FBXO11 and decreases upon cell cycle exit induced by TGF-beta or serum starvation. In terms of tissue distribution, expressed in placenta and testis, very low expression seen in skeletal muscle. Detected in all hematopoietic tissues examined, with highest expression in thymus and bone marrow. A low level detected in the spleen and lymph node, and barely detectable level in the peripheral leukocytes. RA treatment down-regulated the expression in NT2 cell.

The protein localises to the nucleus. It is found in the nucleus membrane. Its subcellular location is the cytoplasm. It localises to the cytoskeleton. The protein resides in the microtubule organizing center. The protein localises to the centrosome. It is found in the chromosome. It participates in protein modification; protein ubiquitination. Substrate-specific adapter of a DCX (DDB1-CUL4-X-box) E3 ubiquitin-protein ligase complex required for cell cycle control, DNA damage response and translesion DNA synthesis. The DCX(DTL) complex, also named CRL4(CDT2) complex, mediates the polyubiquitination and subsequent degradation of CDT1, CDKN1A/p21(CIP1), FBH1, KMT5A and SDE2. CDT1 degradation in response to DNA damage is necessary to ensure proper cell cycle regulation of DNA replication. CDKN1A/p21(CIP1) degradation during S phase or following UV irradiation is essential to control replication licensing. KMT5A degradation is also important for a proper regulation of mechanisms such as TGF-beta signaling, cell cycle progression, DNA repair and cell migration. Most substrates require their interaction with PCNA for their polyubiquitination: substrates interact with PCNA via their PIP-box, and those containing the 'K+4' motif in the PIP box, recruit the DCX(DTL) complex, leading to their degradation. In undamaged proliferating cells, the DCX(DTL) complex also promotes the 'Lys-164' monoubiquitination of PCNA, thereby being involved in PCNA-dependent translesion DNA synthesis. The DDB1-CUL4A-DTL E3 ligase complex regulates the circadian clock function by mediating the ubiquitination and degradation of CRY1. The chain is Denticleless protein homolog (DTL) from Homo sapiens (Human).